The following is a 217-amino-acid chain: Small ribosomal subunit protein uS3 (217 aa).

Residues Ile-40 to Arg-110 enclose the KH type-2 domain.

It belongs to the universal ribosomal protein uS3 family. Part of the 30S ribosomal subunit. Forms a tight complex with proteins S10 and S14.

Binds the lower part of the 30S subunit head. Binds mRNA in the 70S ribosome, positioning it for translation. This is Small ribosomal subunit protein uS3 from Rickettsia felis (strain ATCC VR-1525 / URRWXCal2) (Rickettsia azadi).